The sequence spans 194 residues: dITP/XTP pyrophosphatase (194 aa).

9–14 (THNPGK) is a binding site for substrate. D40 and D69 together coordinate Mg(2+). The active-site Proton acceptor is the D69. Substrate is bound by residues S70, 152-155 (FGYD), K175, and 180-181 (HR).

The protein belongs to the HAM1 NTPase family. In terms of assembly, homodimer. Mg(2+) serves as cofactor.

The catalysed reaction is XTP + H2O = XMP + diphosphate + H(+). The enzyme catalyses dITP + H2O = dIMP + diphosphate + H(+). It carries out the reaction ITP + H2O = IMP + diphosphate + H(+). Functionally, pyrophosphatase that catalyzes the hydrolysis of nucleoside triphosphates to their monophosphate derivatives, with a high preference for the non-canonical purine nucleotides XTP (xanthosine triphosphate), dITP (deoxyinosine triphosphate) and ITP. Seems to function as a house-cleaning enzyme that removes non-canonical purine nucleotides from the nucleotide pool, thus preventing their incorporation into DNA/RNA and avoiding chromosomal lesions. In Caulobacter vibrioides (strain ATCC 19089 / CIP 103742 / CB 15) (Caulobacter crescentus), this protein is dITP/XTP pyrophosphatase.